Reading from the N-terminus, the 226-residue chain is Eukaryotic translation initiation factor 3 subunit K (226 aa).

A PCI domain is found at 42–200 (YNLDANLSLL…QLIVLPRNEF (159 aa)).

This sequence belongs to the eIF-3 subunit K family. In terms of assembly, component of the eukaryotic translation initiation factor 3 (eIF-3) complex.

Its subcellular location is the cytoplasm. Component of the eukaryotic translation initiation factor 3 (eIF-3) complex, which is involved in protein synthesis of a specialized repertoire of mRNAs and, together with other initiation factors, stimulates binding of mRNA and methionyl-tRNAi to the 40S ribosome. The eIF-3 complex specifically targets and initiates translation of a subset of mRNAs involved in cell proliferation. The protein is Eukaryotic translation initiation factor 3 subunit K (TIF3K1) of Oryza sativa subsp. japonica (Rice).